The following is a 134-amino-acid chain: Acyl carrier protein SF2, chloroplastic (134 aa).

A chloroplast-targeting transit peptide spans 1–51 (MSTTFCSSVSMQATSLAATTRISFQKPALVSTTNLSFNLRRSIPTRFSISC). In terms of domain architecture, Carrier spans 55–130 (PETVEKVSKI…EAAELIEELV (76 aa)). Position 90 is an O-(pantetheine 4'-phosphoryl)serine (Ser90).

This sequence belongs to the acyl carrier protein (ACP) family. Post-translationally, 4'-phosphopantetheine is transferred from CoA to a specific serine of apo-ACP by acpS. This modification is essential for activity because fatty acids are bound in thioester linkage to the sulfhydryl of the prosthetic group.

It is found in the plastid. The protein resides in the chloroplast. It participates in lipid metabolism; fatty acid biosynthesis. Its function is as follows. Carrier of the growing fatty acid chain in fatty acid biosynthesis. This chain is Acyl carrier protein SF2, chloroplastic (Acl1.1), found in Brassica campestris (Field mustard).